Here is a 393-residue protein sequence, read N- to C-terminus: Aspartate aminotransferase (393 aa).

Glycine 38, tryptophan 124, and asparagine 174 together coordinate L-aspartate. At lysine 237 the chain carries N6-(pyridoxal phosphate)lysine.

This sequence belongs to the class-I pyridoxal-phosphate-dependent aminotransferase family. Homodimer. Requires pyridoxal 5'-phosphate as cofactor.

The protein resides in the cytoplasm. It catalyses the reaction L-aspartate + 2-oxoglutarate = oxaloacetate + L-glutamate. This chain is Aspartate aminotransferase (aspB), found in Bacillus subtilis (strain 168).